A 43-amino-acid polypeptide reads, in one-letter code: Augerpeptide hhe9.2 (43 aa).

Positions 2–40 (EEVGCFPNVCKNDGNCSIETSTGMTRCQCLEGYTGHVCE) constitute an EGF-like domain. 3 disulfide bridges follow: C6-C28, C11-C30, and C17-C39.

Expressed by the venom duct.

The protein resides in the secreted. The chain is Augerpeptide hhe9.2 from Hastula hectica (Sea snail).